A 427-amino-acid chain; its full sequence is Mitochondrial fission protein ELM1 (427 aa).

Interacts with DRP3 and DRP3B.

It is found in the mitochondrion outer membrane. Functionally, plant-specific factor involved in mitochondria fission. Is required for the correct localization of DRP3A from the cytosol to mitochondrial fission sites. Does not seem to be required for peroxisomal division. The polypeptide is Mitochondrial fission protein ELM1 (ELM1) (Arabidopsis thaliana (Mouse-ear cress)).